Reading from the N-terminus, the 149-residue chain is 17 kDa major membrane protein (149 aa).

A signal peptide spans 1–19 (MKKIIKLSLLSLSIAGLAS). Cys20 is lipidated: N-palmitoyl cysteine. Cys20 is lipidated: S-diacylglycerol cysteine.

It localises to the cell outer membrane. The protein is 17 kDa major membrane protein of Francisella tularensis subsp. holarctica (strain LVS).